A 113-amino-acid chain; its full sequence is Photosystem II reaction center Psb28 protein (113 aa).

The protein belongs to the Psb28 family. In terms of assembly, part of the photosystem II complex.

The protein resides in the cellular thylakoid membrane. The protein is Photosystem II reaction center Psb28 protein of Trichodesmium erythraeum (strain IMS101).